We begin with the raw amino-acid sequence, 365 residues long: UDP-N-acetylglucosamine--N-acetylmuramyl-(pentapeptide) pyrophosphoryl-undecaprenol N-acetylglucosamine transferase (365 aa).

UDP-N-acetyl-alpha-D-glucosamine is bound by residues 10–12 (TGG), asparagine 128, arginine 170, serine 199, isoleucine 250, and glutamine 295.

It belongs to the glycosyltransferase 28 family. MurG subfamily.

It is found in the cell inner membrane. It catalyses the reaction di-trans,octa-cis-undecaprenyl diphospho-N-acetyl-alpha-D-muramoyl-L-alanyl-D-glutamyl-meso-2,6-diaminopimeloyl-D-alanyl-D-alanine + UDP-N-acetyl-alpha-D-glucosamine = di-trans,octa-cis-undecaprenyl diphospho-[N-acetyl-alpha-D-glucosaminyl-(1-&gt;4)]-N-acetyl-alpha-D-muramoyl-L-alanyl-D-glutamyl-meso-2,6-diaminopimeloyl-D-alanyl-D-alanine + UDP + H(+). It participates in cell wall biogenesis; peptidoglycan biosynthesis. Cell wall formation. Catalyzes the transfer of a GlcNAc subunit on undecaprenyl-pyrophosphoryl-MurNAc-pentapeptide (lipid intermediate I) to form undecaprenyl-pyrophosphoryl-MurNAc-(pentapeptide)GlcNAc (lipid intermediate II). This chain is UDP-N-acetylglucosamine--N-acetylmuramyl-(pentapeptide) pyrophosphoryl-undecaprenol N-acetylglucosamine transferase, found in Chlorobium luteolum (strain DSM 273 / BCRC 81028 / 2530) (Pelodictyon luteolum).